The primary structure comprises 335 residues: Ketol-acid reductoisomerase (NADP(+)) (335 aa).

Residues 2 to 182 enclose the KARI N-terminal Rossmann domain; the sequence is VEMFYDKDAD…GCTRAGVIET (181 aa). Residues 25-28, Arg48, Ser51, and 83-86 each bind NADP(+); these read YGSQ and DEIQ. Residue His108 is part of the active site. Gly134 contributes to the NADP(+) binding site. In terms of domain architecture, KARI C-terminal knotted spans 183–328; that stretch reads TFREETETDL…KKLRAMMPWL (146 aa). Mg(2+)-binding residues include Asp191, Glu195, Glu227, and Glu231. Position 252 (Ser252) interacts with substrate.

The protein belongs to the ketol-acid reductoisomerase family. Mg(2+) is required as a cofactor.

It carries out the reaction (2R)-2,3-dihydroxy-3-methylbutanoate + NADP(+) = (2S)-2-acetolactate + NADPH + H(+). The enzyme catalyses (2R,3R)-2,3-dihydroxy-3-methylpentanoate + NADP(+) = (S)-2-ethyl-2-hydroxy-3-oxobutanoate + NADPH + H(+). It participates in amino-acid biosynthesis; L-isoleucine biosynthesis; L-isoleucine from 2-oxobutanoate: step 2/4. Its pathway is amino-acid biosynthesis; L-valine biosynthesis; L-valine from pyruvate: step 2/4. Its function is as follows. Involved in the biosynthesis of branched-chain amino acids (BCAA). Catalyzes an alkyl-migration followed by a ketol-acid reduction of (S)-2-acetolactate (S2AL) to yield (R)-2,3-dihydroxy-isovalerate. In the isomerase reaction, S2AL is rearranged via a Mg-dependent methyl migration to produce 3-hydroxy-3-methyl-2-ketobutyrate (HMKB). In the reductase reaction, this 2-ketoacid undergoes a metal-dependent reduction by NADPH to yield (R)-2,3-dihydroxy-isovalerate. This chain is Ketol-acid reductoisomerase (NADP(+)), found in Methanococcoides burtonii (strain DSM 6242 / NBRC 107633 / OCM 468 / ACE-M).